We begin with the raw amino-acid sequence, 498 residues long: ATP synthase subunit beta, chloroplastic (498 aa).

172–179 (GGAGVGKT) is a binding site for ATP.

It belongs to the ATPase alpha/beta chains family. As to quaternary structure, F-type ATPases have 2 components, CF(1) - the catalytic core - and CF(0) - the membrane proton channel. CF(1) has five subunits: alpha(3), beta(3), gamma(1), delta(1), epsilon(1). CF(0) has four main subunits: a(1), b(1), b'(1) and c(9-12).

The protein localises to the plastid. Its subcellular location is the chloroplast thylakoid membrane. It carries out the reaction ATP + H2O + 4 H(+)(in) = ADP + phosphate + 5 H(+)(out). In terms of biological role, produces ATP from ADP in the presence of a proton gradient across the membrane. The catalytic sites are hosted primarily by the beta subunits. The polypeptide is ATP synthase subunit beta, chloroplastic (Brasenia schreberi (Water shield)).